The sequence spans 194 residues: FMN-dependent NADH:quinone oxidoreductase (194 aa).

Residues serine 10 and 90–93 (MYNL) each bind FMN.

The protein belongs to the azoreductase type 1 family. In terms of assembly, homodimer. The cofactor is FMN.

It catalyses the reaction 2 a quinone + NADH + H(+) = 2 a 1,4-benzosemiquinone + NAD(+). The enzyme catalyses N,N-dimethyl-1,4-phenylenediamine + anthranilate + 2 NAD(+) = 2-(4-dimethylaminophenyl)diazenylbenzoate + 2 NADH + 2 H(+). Functionally, quinone reductase that provides resistance to thiol-specific stress caused by electrophilic quinones. Its function is as follows. Also exhibits azoreductase activity. Catalyzes the reductive cleavage of the azo bond in aromatic azo compounds to the corresponding amines. This chain is FMN-dependent NADH:quinone oxidoreductase, found in Haemophilus influenzae (strain PittEE).